The following is a 109-amino-acid chain: Flagellar transcriptional regulator FlhD (109 aa).

This sequence belongs to the FlhD family. As to quaternary structure, homodimer; disulfide-linked. Forms a heterohexamer composed of two FlhC and four FlhD subunits. Each FlhC binds a FlhD dimer, forming a heterotrimer, and a hexamer assembles by dimerization of two heterotrimers.

It localises to the cytoplasm. Functionally, functions in complex with FlhC as a master transcriptional regulator that regulates transcription of several flagellar and non-flagellar operons by binding to their promoter region. Activates expression of class 2 flagellar genes, including fliA, which is a flagellum-specific sigma factor that turns on the class 3 genes. Also regulates genes whose products function in a variety of physiological pathways. The polypeptide is Flagellar transcriptional regulator FlhD (Acidovorax sp. (strain JS42)).